Here is a 352-residue protein sequence, read N- to C-terminus: Holliday junction branch migration complex subunit RuvB (352 aa).

The segment at 4–191 (TDKLAAPARV…FGIVARLEFY (188 aa)) is large ATPase domain (RuvB-L). ATP-binding positions include leucine 30, arginine 31, glycine 72, lysine 75, threonine 76, threonine 77, 138–140 (EDY), arginine 181, tyrosine 191, and arginine 228. Threonine 76 contributes to the Mg(2+) binding site. The interval 192-262 (TADELARIVT…MADAALAMLD (71 aa)) is small ATPAse domain (RuvB-S). The interval 265-352 (SVGFDLMDRK…SGASELFGDA (88 aa)) is head domain (RuvB-H). Residues arginine 301, arginine 320, and arginine 325 each contribute to the DNA site.

Belongs to the RuvB family. Homohexamer. Forms an RuvA(8)-RuvB(12)-Holliday junction (HJ) complex. HJ DNA is sandwiched between 2 RuvA tetramers; dsDNA enters through RuvA and exits via RuvB. An RuvB hexamer assembles on each DNA strand where it exits the tetramer. Each RuvB hexamer is contacted by two RuvA subunits (via domain III) on 2 adjacent RuvB subunits; this complex drives branch migration. In the full resolvosome a probable DNA-RuvA(4)-RuvB(12)-RuvC(2) complex forms which resolves the HJ.

Its subcellular location is the cytoplasm. It catalyses the reaction ATP + H2O = ADP + phosphate + H(+). Its function is as follows. The RuvA-RuvB-RuvC complex processes Holliday junction (HJ) DNA during genetic recombination and DNA repair, while the RuvA-RuvB complex plays an important role in the rescue of blocked DNA replication forks via replication fork reversal (RFR). RuvA specifically binds to HJ cruciform DNA, conferring on it an open structure. The RuvB hexamer acts as an ATP-dependent pump, pulling dsDNA into and through the RuvAB complex. RuvB forms 2 homohexamers on either side of HJ DNA bound by 1 or 2 RuvA tetramers; 4 subunits per hexamer contact DNA at a time. Coordinated motions by a converter formed by DNA-disengaged RuvB subunits stimulates ATP hydrolysis and nucleotide exchange. Immobilization of the converter enables RuvB to convert the ATP-contained energy into a lever motion, pulling 2 nucleotides of DNA out of the RuvA tetramer per ATP hydrolyzed, thus driving DNA branch migration. The RuvB motors rotate together with the DNA substrate, which together with the progressing nucleotide cycle form the mechanistic basis for DNA recombination by continuous HJ branch migration. Branch migration allows RuvC to scan DNA until it finds its consensus sequence, where it cleaves and resolves cruciform DNA. The sequence is that of Holliday junction branch migration complex subunit RuvB from Cupriavidus necator (strain ATCC 17699 / DSM 428 / KCTC 22496 / NCIMB 10442 / H16 / Stanier 337) (Ralstonia eutropha).